A 390-amino-acid polypeptide reads, in one-letter code: Stearoyl-[acyl-carrier-protein] 9-desaturase 5, chloroplastic (390 aa).

The disordered stretch occupies residues 1 to 22; that stretch reads MAFAASHTASPSSCGGVAQRRS. The transit peptide at 1-31 directs the protein to the chloroplast; the sequence is MAFAASHTASPSSCGGVAQRRSNGMSPVVAM. Positions 132, 170, 173, 223, 256, and 259 each coordinate Fe cation.

The protein belongs to the fatty acid desaturase type 2 family. As to quaternary structure, homodimer. The cofactor is Fe(2+).

Its subcellular location is the plastid. The protein localises to the chloroplast. It carries out the reaction octadecanoyl-[ACP] + 2 reduced [2Fe-2S]-[ferredoxin] + O2 + 2 H(+) = (9Z)-octadecenoyl-[ACP] + 2 oxidized [2Fe-2S]-[ferredoxin] + 2 H2O. It participates in lipid metabolism; fatty acid metabolism. In terms of biological role, converts stearoyl-ACP to oleoyl-ACP by introduction of a cis double bond between carbons 9 and 10 of the acyl chain. The polypeptide is Stearoyl-[acyl-carrier-protein] 9-desaturase 5, chloroplastic (Oryza sativa subsp. japonica (Rice)).